We begin with the raw amino-acid sequence, 327 residues long: Complex I intermediate-associated protein 30, mitochondrial (327 aa).

The transit peptide at 1-24 (MALVHKLLRDTYILRKFSKPTSAL) directs the protein to the mitochondrion. Residues 42-63 (PVASPGKASSQRKTEGDLQGDH) are disordered. A compositionally biased stretch (basic and acidic residues) spans 53–63 (RKTEGDLQGDH). The residue at position 318 (Ser-318) is a Phosphoserine.

The protein belongs to the CIA30 family. In terms of assembly, part of the mitochondrial complex I assembly/MCIA complex that comprises at least the core subunits TMEM126B, NDUFAF1, ECSIT and ACAD9 and complement subunits such as COA1 and TMEM186. Interacts with ECSIT. Interacts with ACAD9. At early stages of complex I assembly, it is found in intermediate subcomplexes that contain different subunits including NDUFB6, NDUFA6, NDUFA9, NDUFS3, NDUFS7, ND1, ND2 and ND3. Interacts with TMEM70 and TMEM242.

The protein resides in the mitochondrion. It is found in the mitochondrion matrix. Its function is as follows. As part of the MCIA complex, involved in the assembly of the mitochondrial complex I. The chain is Complex I intermediate-associated protein 30, mitochondrial from Gorilla gorilla gorilla (Western lowland gorilla).